Consider the following 333-residue polypeptide: Probable cytosolic iron-sulfur protein assembly protein 1 (333 aa).

7 WD repeats span residues 12–50 (LHDD…IIEE), 55–94 (AHKK…YNDE), 107–146 (GHEN…EEFE), 153–192 (EHSQ…WECC), 197–238 (GHEG…GEYE), 250–288 (AHTR…WIVE), and 298–333 (YETN…FDEN).

Belongs to the WD repeat CIA1 family. Interacts with NAR1.

The protein localises to the cytoplasm. It localises to the nucleus. Its function is as follows. Essential component of the cytosolic iron-sulfur (Fe/S) protein assembly machinery. Required for the maturation of extramitochondrial Fe/S proteins. The chain is Probable cytosolic iron-sulfur protein assembly protein 1 from Kluyveromyces lactis (strain ATCC 8585 / CBS 2359 / DSM 70799 / NBRC 1267 / NRRL Y-1140 / WM37) (Yeast).